A 127-amino-acid chain; its full sequence is Small integral membrane protein 33 (127 aa).

Asparagine 15 is a glycosylation site (N-linked (GlcNAc...) asparagine). Residues proline 38 to valine 58 traverse the membrane as a helical segment.

Its subcellular location is the membrane. This chain is Small integral membrane protein 33, found in Mus musculus (Mouse).